The following is a 206-amino-acid chain: Urease accessory protein UreG (206 aa).

Residue G13–T20 participates in GTP binding.

This sequence belongs to the SIMIBI class G3E GTPase family. UreG subfamily. In terms of assembly, homodimer. UreD, UreF and UreG form a complex that acts as a GTP-hydrolysis-dependent molecular chaperone, activating the urease apoprotein by helping to assemble the nickel containing metallocenter of UreC. The UreE protein probably delivers the nickel.

The protein localises to the cytoplasm. Its function is as follows. Facilitates the functional incorporation of the urease nickel metallocenter. This process requires GTP hydrolysis, probably effectuated by UreG. This is Urease accessory protein UreG from Natronomonas pharaonis (strain ATCC 35678 / DSM 2160 / CIP 103997 / JCM 8858 / NBRC 14720 / NCIMB 2260 / Gabara) (Halobacterium pharaonis).